A 1425-amino-acid polypeptide reads, in one-letter code: Neuropathy target esterase sws (1425 aa).

Residues 1-34 lie on the Lumenal side of the membrane; sequence MDVLEMLRASASGSYNTIFSDAWCQYVSKQITAT. Residues 35 to 55 traverse the membrane as a helical segment; sequence VYMYFALVMMSLLFIAWFLYF. The Cytoplasmic portion of the chain corresponds to 56–1425; that stretch reads KRMARLRLRD…RSSPNNETKN (1370 aa). Residue 174 to 301 coordinates a nucleoside 3',5'-cyclic phosphate; that stretch reads IFGHFEKPVF…IRVIQVIMIR (128 aa). 2 stretches are compositionally biased toward polar residues: residues 332–348 and 357–366; these read TMSGPINSQTSQSSRQA and SQMNLMQSAV. The disordered stretch occupies residues 332 to 410; sequence TMSGPINSQT…NPDGSFHGTT (79 aa). Over residues 367-381 the composition is skewed to low complexity; that stretch reads SGTGSSGVSVTVTRP. S444 and S453 each carry phosphoserine. A nucleoside 3',5'-cyclic phosphate-binding positions include 482–609 and 598–727; these read ELGL…VVRR and IVLD…HRFL. One can recognise a PNPLA domain in the interval 952 to 1118; the sequence is LVLGGGGARG…VNNLPADVMH (167 aa). The GXGXXG signature appears at 956 to 961; the sequence is GGGARG. Positions 983-987 match the GXSXG motif; the sequence is GVSIG. Catalysis depends on S985, which acts as the Nucleophile. The active-site Proton acceptor is the D1105. Residues 1105-1107 carry the DGA/G motif; that stretch reads DGG. S1160 bears the Phosphoserine mark. The disordered stretch occupies residues 1330–1425; sequence LERKTDKSTQ…RSSPNNETKN (96 aa). Low complexity predominate over residues 1337 to 1347; the sequence is STQSSPPSNSR. The span at 1348–1358 shows a compositional bias: basic and acidic residues; it reads SDMRGKEEARH. Residues 1380–1403 show a composition bias toward low complexity; sequence TKTQTGQEQELQQEQQDQGATAEQ. Over residues 1404-1416 the composition is skewed to basic and acidic residues; that stretch reads LVDKDKEENKENR.

Belongs to the NTE family. In terms of assembly, interacts with Pka-C3; interaction inhibits the catalytic function of Pka-C3 and the esterase activity of sws. In terms of tissue distribution, isoform A and isoform B are expressed in the entire brain cortex; cortical cell bodies of adult brain. Sws and Pka-C3 are colocalized in all neurons.

The protein resides in the endoplasmic reticulum membrane. The enzyme catalyses a 1-acyl-sn-glycero-3-phosphocholine + H2O = sn-glycerol 3-phosphocholine + a fatty acid + H(+). Functionally, phospholipase B that deacylates intracellular phosphatidylcholine (PtdCho), generating glycerophosphocholine (GroPtdCho). This deacylation occurs at both sn-2 and sn-1 positions of PtdCho. Its specific chemical modification by certain organophosphorus (OP) compounds leads to distal axonopathy. Plays a role in the signaling mechanism between neurons and glia that regulates glia wrapping during development of the adult brain. Essential for membrane lipid homeostasis and cell survival in both neurons and glia of the adult brain. This Drosophila melanogaster (Fruit fly) protein is Neuropathy target esterase sws (sws).